Consider the following 152-residue polypeptide: Xanthine-guanine phosphoribosyltransferase (152 aa).

5-phospho-alpha-D-ribose 1-diphosphate contacts are provided by residues 37–38, arginine 69, and 88–96; these read RG and DDLVDTGGT. Arginine 69 contacts GMP. Residue aspartate 89 coordinates Mg(2+). Aspartate 92 and isoleucine 135 together coordinate guanine. Residues aspartate 92 and isoleucine 135 each contribute to the xanthine site. GMP is bound by residues 92-96 and 134-135; these read DTGGT and WI.

Belongs to the purine/pyrimidine phosphoribosyltransferase family. XGPT subfamily. Homotetramer. Mg(2+) serves as cofactor.

The protein resides in the cell inner membrane. The enzyme catalyses GMP + diphosphate = guanine + 5-phospho-alpha-D-ribose 1-diphosphate. It carries out the reaction XMP + diphosphate = xanthine + 5-phospho-alpha-D-ribose 1-diphosphate. The catalysed reaction is IMP + diphosphate = hypoxanthine + 5-phospho-alpha-D-ribose 1-diphosphate. It participates in purine metabolism; GMP biosynthesis via salvage pathway; GMP from guanine: step 1/1. It functions in the pathway purine metabolism; XMP biosynthesis via salvage pathway; XMP from xanthine: step 1/1. Its function is as follows. Purine salvage pathway enzyme that catalyzes the transfer of the ribosyl-5-phosphate group from 5-phospho-alpha-D-ribose 1-diphosphate (PRPP) to the N9 position of the 6-oxopurines guanine and xanthine to form the corresponding ribonucleotides GMP (guanosine 5'-monophosphate) and XMP (xanthosine 5'-monophosphate), with the release of PPi. To a lesser extent, also acts on hypoxanthine. This Shigella boydii serotype 18 (strain CDC 3083-94 / BS512) protein is Xanthine-guanine phosphoribosyltransferase.